Here is a 667-residue protein sequence, read N- to C-terminus: Transketolase (667 aa).

His27 contributes to the substrate binding site. Residues His67 and 115-117 contribute to the thiamine diphosphate site; that span reads GPL. Mg(2+) is bound at residue Asp156. 2 residues coordinate thiamine diphosphate: Gly157 and Asn186. 2 residues coordinate Mg(2+): Asn186 and Ile188. Residues His262, Arg357, and Ser384 each contribute to the substrate site. A thiamine diphosphate-binding site is contributed by His262. Glu411 acts as the Proton donor in catalysis. A thiamine diphosphate-binding site is contributed by Phe437. Substrate contacts are provided by His461, Asp469, and Arg520.

The protein belongs to the transketolase family. As to quaternary structure, homodimer. Mg(2+) serves as cofactor. The cofactor is Ca(2+). Mn(2+) is required as a cofactor. Requires Co(2+) as cofactor. It depends on thiamine diphosphate as a cofactor.

It catalyses the reaction D-sedoheptulose 7-phosphate + D-glyceraldehyde 3-phosphate = aldehydo-D-ribose 5-phosphate + D-xylulose 5-phosphate. Functionally, catalyzes the transfer of a two-carbon ketol group from a ketose donor to an aldose acceptor, via a covalent intermediate with the cofactor thiamine pyrophosphate. This Bacillus subtilis (strain 168) protein is Transketolase (tkt).